The primary structure comprises 366 residues: Acetylserotonin O-methyltransferase 3 (366 aa).

4 residues coordinate S-adenosyl-L-homocysteine: G209, D232, D253, and K267. H271 acts as the Proton acceptor in catalysis. Residues E302 and E332 contribute to the active site.

It belongs to the class I-like SAM-binding methyltransferase superfamily. Cation-independent O-methyltransferase family. In terms of assembly, homodimer. In terms of tissue distribution, expressed at low levels in roots, shoots, leaves, stems and flowers.

The protein resides in the cytoplasm. The catalysed reaction is N-acetylserotonin + S-adenosyl-L-methionine = melatonin + S-adenosyl-L-homocysteine + H(+). It functions in the pathway aromatic compound metabolism; melatonin biosynthesis; melatonin from serotonin: step 1/2. Its function is as follows. Methyltransferase which catalyzes the transfer of a methyl group onto N-acetylserotonin, producing melatonin (N-acetyl-5-methoxytryptamine). In Oryza sativa subsp. japonica (Rice), this protein is Acetylserotonin O-methyltransferase 3.